Here is a 404-residue protein sequence, read N- to C-terminus: Exodeoxyribonuclease 7 large subunit (404 aa).

It belongs to the XseA family. As to quaternary structure, heterooligomer composed of large and small subunits.

The protein localises to the cytoplasm. It catalyses the reaction Exonucleolytic cleavage in either 5'- to 3'- or 3'- to 5'-direction to yield nucleoside 5'-phosphates.. Functionally, bidirectionally degrades single-stranded DNA into large acid-insoluble oligonucleotides, which are then degraded further into small acid-soluble oligonucleotides. The sequence is that of Exodeoxyribonuclease 7 large subunit from Tropheryma whipplei (strain TW08/27) (Whipple's bacillus).